A 109-amino-acid polypeptide reads, in one-letter code: uncharacterized protein (109 aa).

A disordered region spans residues 77–98 (TRTGHAYPRFTRPSFPSCNRNG).

This is an uncharacterized protein from Homo sapiens (Human).